The primary structure comprises 472 residues: UDP-N-acetylmuramate--L-alanine ligase (472 aa).

122–128 (GTHGKTT) is an ATP binding site.

Belongs to the MurCDEF family.

The protein resides in the cytoplasm. The enzyme catalyses UDP-N-acetyl-alpha-D-muramate + L-alanine + ATP = UDP-N-acetyl-alpha-D-muramoyl-L-alanine + ADP + phosphate + H(+). Its pathway is cell wall biogenesis; peptidoglycan biosynthesis. Its function is as follows. Cell wall formation. The protein is UDP-N-acetylmuramate--L-alanine ligase of Thermobifida fusca (strain YX).